A 98-amino-acid chain; its full sequence is NADH-ubiquinone oxidoreductase chain 4L (98 aa).

3 consecutive transmembrane segments (helical) span residues 2 to 22 (PPIFTNVILAFATAFLGTLIF), 29 to 49 (SLLCLEGMMLSLFILSTLIIL), and 61 to 81 (ILLLVFAACEAAIGLALLVMV).

It belongs to the complex I subunit 4L family. Core subunit of respiratory chain NADH dehydrogenase (Complex I) which is composed of 45 different subunits.

It is found in the mitochondrion inner membrane. It carries out the reaction a ubiquinone + NADH + 5 H(+)(in) = a ubiquinol + NAD(+) + 4 H(+)(out). In terms of biological role, core subunit of the mitochondrial membrane respiratory chain NADH dehydrogenase (Complex I) which catalyzes electron transfer from NADH through the respiratory chain, using ubiquinone as an electron acceptor. Part of the enzyme membrane arm which is embedded in the lipid bilayer and involved in proton translocation. This chain is NADH-ubiquinone oxidoreductase chain 4L (MT-ND4L), found in Avahi occidentalis (Western woolly lemur).